The chain runs to 109 residues: Cell division protein ZapA (109 aa).

Residues 21-99 are a coiled coil; it reads PEQRDALNQA…IEQALLEQGR (79 aa).

This sequence belongs to the ZapA family. Type 1 subfamily. As to quaternary structure, homodimer. Interacts with FtsZ.

Its subcellular location is the cytoplasm. Activator of cell division through the inhibition of FtsZ GTPase activity, therefore promoting FtsZ assembly into bundles of protofilaments necessary for the formation of the division Z ring. It is recruited early at mid-cell but it is not essential for cell division. This Cronobacter sakazakii (strain ATCC BAA-894) (Enterobacter sakazakii) protein is Cell division protein ZapA.